A 146-amino-acid chain; its full sequence is Putative pre-16S rRNA nuclease (146 aa).

This sequence belongs to the YqgF nuclease family.

Its subcellular location is the cytoplasm. Could be a nuclease involved in processing of the 5'-end of pre-16S rRNA. In Paraburkholderia xenovorans (strain LB400), this protein is Putative pre-16S rRNA nuclease.